Reading from the N-terminus, the 161-residue chain is Cytochrome c-type biogenesis protein CcmE (161 aa).

Over 1 to 8 (MNPRRKKR) the chain is Cytoplasmic. The helical; Signal-anchor for type II membrane protein transmembrane segment at 9 to 29 (LGLILALFVGISATVGLMLYA) threads the bilayer. The Periplasmic segment spans residues 30–161 (LNQNMDLFYT…TEQQKQGTGQ (132 aa)). 2 residues coordinate heme: His-129 and Tyr-133. Residues 142–161 (MKKTHEPLQYTEQQKQGTGQ) form a disordered region. The segment covering 151–161 (YTEQQKQGTGQ) has biased composition (polar residues).

This sequence belongs to the CcmE/CycJ family.

Its subcellular location is the cell inner membrane. In terms of biological role, heme chaperone required for the biogenesis of c-type cytochromes. Transiently binds heme delivered by CcmC and transfers the heme to apo-cytochromes in a process facilitated by CcmF and CcmH. This is Cytochrome c-type biogenesis protein CcmE from Aliivibrio fischeri (strain MJ11) (Vibrio fischeri).